Here is a 141-residue protein sequence, read N- to C-terminus: ATP synthase F(0) complex subunit C3, mitochondrial (141 aa).

The transit peptide at 1–66 (MFACAKLACT…REFQTTAVNR (66 aa)) directs the protein to the mitochondrion. A helical membrane pass occupies residues 82–102 (VGVAGSGAGIGTVFGSLIIGY). Lys109 bears the N6,N6,N6-trimethyllysine mark. Residues 117–137 (ILGFALSEAMGLFCLMVAFLI) form a helical membrane-spanning segment.

This sequence belongs to the ATPase C chain family. In terms of assembly, F-type ATPases have 2 components, CF(1) - the catalytic core - and CF(0) - the membrane proton channel. CF(1) has five subunits: alpha(3), beta(3), gamma(1), delta(1), epsilon(1). CF(0) has three main subunits: a, b and c. Interacts with TMEM70 and TMEM242. Post-translationally, trimethylated by ATPSCKMT at Lys-109. Methylation is required for proper incorporation of the C subunit into the ATP synthase complex and mitochondrial respiration.

It is found in the mitochondrion membrane. Its function is as follows. Mitochondrial membrane ATP synthase (F(1)F(0) ATP synthase or Complex V) produces ATP from ADP in the presence of a proton gradient across the membrane which is generated by electron transport complexes of the respiratory chain. F-type ATPases consist of two structural domains, F(1) - containing the extramembraneous catalytic core and F(0) - containing the membrane proton channel, linked together by a central stalk and a peripheral stalk. During catalysis, ATP synthesis in the catalytic domain of F(1) is coupled via a rotary mechanism of the central stalk subunits to proton translocation. Part of the complex F(0) domain. A homomeric c-ring of probably 10 subunits is part of the complex rotary element. The chain is ATP synthase F(0) complex subunit C3, mitochondrial from Bos taurus (Bovine).